The following is a 495-amino-acid chain: UDP-N-acetylmuramoyl-L-alanyl-D-glutamate--2,6-diaminopimelate ligase (495 aa).

Serine 29 provides a ligand contact to UDP-N-acetyl-alpha-D-muramoyl-L-alanyl-D-glutamate. 111–117 (GTNGKTS) lines the ATP pocket. UDP-N-acetyl-alpha-D-muramoyl-L-alanyl-D-glutamate-binding positions include 153–154 (TT), serine 180, glutamine 186, and arginine 188. Lysine 220 carries the post-translational modification N6-carboxylysine. Meso-2,6-diaminopimelate-binding positions include arginine 384, 408 to 411 (DNPR), glycine 459, and glutamate 463. Positions 408–411 (DNPR) match the Meso-diaminopimelate recognition motif motif.

This sequence belongs to the MurCDEF family. MurE subfamily. It depends on Mg(2+) as a cofactor. In terms of processing, carboxylation is probably crucial for Mg(2+) binding and, consequently, for the gamma-phosphate positioning of ATP.

It is found in the cytoplasm. It catalyses the reaction UDP-N-acetyl-alpha-D-muramoyl-L-alanyl-D-glutamate + meso-2,6-diaminopimelate + ATP = UDP-N-acetyl-alpha-D-muramoyl-L-alanyl-gamma-D-glutamyl-meso-2,6-diaminopimelate + ADP + phosphate + H(+). Its pathway is cell wall biogenesis; peptidoglycan biosynthesis. Its function is as follows. Catalyzes the addition of meso-diaminopimelic acid to the nucleotide precursor UDP-N-acetylmuramoyl-L-alanyl-D-glutamate (UMAG) in the biosynthesis of bacterial cell-wall peptidoglycan. The sequence is that of UDP-N-acetylmuramoyl-L-alanyl-D-glutamate--2,6-diaminopimelate ligase from Xylella fastidiosa (strain 9a5c).